The sequence spans 219 residues: Trafficking protein particle complex subunit 4 (219 aa).

It belongs to the TRAPP small subunits family. TRAPPC4 subfamily. Component of the multisubunit TRAPP (transport protein particle) complex, which includes at least TRAPPC2, TRAPPC2L, TRAPPC3, TRAPPC3L, TRAPPC4, TRAPPC5, TRAPPC8, TRAPPC9, TRAPPC10, TRAPPC11 and TRAPPC12. Interacts with SDC2.

The protein resides in the postsynaptic cell membrane. The protein localises to the golgi apparatus membrane. It is found in the endoplasmic reticulum. It localises to the vesicle. Its function is as follows. Core component of the TRAPP complexes which has a function of guanine nucleotide exchange factor activity for Rab1 GTPase. Plays a role in vesicular transport from endoplasmic reticulum to Golgi and autophagy. May play a role in dendrite postsynaptic membrane trafficking. The polypeptide is Trafficking protein particle complex subunit 4 (Homo sapiens (Human)).